Consider the following 394-residue polypeptide: Venom metalloproteinase antarease-like TtrivMP_A (394 aa).

Residues 1–16 (MISYLASIFLLATVSA) form the signal peptide. The propeptide occupies 17–158 (VPSGRVEVVF…AENVSRMAEE (142 aa)). N-linked (GlcNAc...) asparagine glycosylation occurs at Asn-151. Positions 162-390 (IVVEYYIVTD…KPTAFCIFEQ (229 aa)) constitute a Peptidase M12B domain. A disulfide bond links Cys-295 and Cys-386. His-319 is a Zn(2+) binding site. Residue Glu-320 is part of the active site. Zn(2+)-binding residues include His-323 and His-329.

Belongs to the venom metalloproteinase (M12B) family. Zn(2+) is required as a cofactor. As to expression, expressed by the venom gland.

Its subcellular location is the secreted. With respect to regulation, inhibited by EDTA. Functionally, acts as a metalloprotease. Penetrates intact tissue and specifically cleaves the vesicle-associated membrane protein 2 (VAMP2) (part of the SNARE complex) involved in pancreatic secretion, thus disrupting the normal vesicular traffic. This is Venom metalloproteinase antarease-like TtrivMP_A from Tityus trivittatus (Argentinean scorpion).